A 514-amino-acid polypeptide reads, in one-letter code: Efflux pump aflT (514 aa).

A run of 10 helical transmembrane segments spans residues 13-33 (ISGMKLYLIVLSLLLAVFCVA), 61-81 (SAYLLTTCAFQLLYGKLYALF), 85-105 (WVFLVALCIFEVGSLICGVAP), 116-136 (IAGVGSSGIFTGALVTIAHIV), 146-166 (GLLGGMYGIASVAGPLLGGAF), 174-194 (WCFYINLPVGGVTAVVILFLL), 218-238 (GTIVFTPSIICVLLALQWGGV), 247-267 (IIALFVLFGVLLITFIIIQVL), 289-309 (VFVFFIGASMFVMIYYVPIWF), and 321-341 (GIDSIALILANTAGAIISGAV). N-linked (GlcNAc...) asparagine glycosylation occurs at Asn-343. 4 helical membrane-spanning segments follow: residues 351-371 (WFIVSSVIMSIGAGCLTLFTV), 378-398 (WIGFLFLYGIGVGFGFQQGAV), 411-431 (IGTALIWFVQMLGGALFTSVA), and 485-505 (LDVFQVALICSCLSILGAVGI).

It belongs to the major facilitator superfamily. TCR/Tet family.

Its subcellular location is the cell membrane. Its function is as follows. Efflux pump; part of the gene cluster that mediates the biosynthesis of aflatoxins. This is Efflux pump aflT from Aspergillus parasiticus (strain ATCC 56775 / NRRL 5862 / SRRC 143 / SU-1).